The sequence spans 526 residues: GMP synthase [glutamine-hydrolyzing] (526 aa).

Residues 10 to 208 (RILILDFGSQ…VVDLCGCEKL (199 aa)) form the Glutamine amidotransferase type-1 domain. The active-site Nucleophile is the Cys87. Residues His182 and Glu184 contribute to the active site. Positions 209–401 (WTTENIIDDS…LGLPSDMVYR (193 aa)) constitute a GMPS ATP-PPase domain. ATP is bound at residue 236-242 (SGGVDSS).

Homodimer.

The catalysed reaction is XMP + L-glutamine + ATP + H2O = GMP + L-glutamate + AMP + diphosphate + 2 H(+). The protein operates within purine metabolism; GMP biosynthesis; GMP from XMP (L-Gln route): step 1/1. Functionally, catalyzes the synthesis of GMP from XMP. This chain is GMP synthase [glutamine-hydrolyzing], found in Hydrogenovibrio crunogenus (strain DSM 25203 / XCL-2) (Thiomicrospira crunogena).